A 408-amino-acid polypeptide reads, in one-letter code: Imidazolonepropionase (408 aa).

Residues His-73 and His-75 each contribute to the Fe(3+) site. Zn(2+) is bound by residues His-73 and His-75. The 4-imidazolone-5-propanoate site is built by Arg-82, Tyr-145, and His-178. Tyr-145 provides a ligand contact to N-formimidoyl-L-glutamate. Position 243 (His-243) interacts with Fe(3+). A Zn(2+)-binding site is contributed by His-243. Gln-246 is a 4-imidazolone-5-propanoate binding site. Residue Asp-318 coordinates Fe(3+). Asp-318 contacts Zn(2+). Asn-320 and Gly-322 together coordinate N-formimidoyl-L-glutamate. Ser-323 contributes to the 4-imidazolone-5-propanoate binding site.

This sequence belongs to the metallo-dependent hydrolases superfamily. HutI family. Zn(2+) is required as a cofactor. Requires Fe(3+) as cofactor.

Its subcellular location is the cytoplasm. It carries out the reaction 4-imidazolone-5-propanoate + H2O = N-formimidoyl-L-glutamate. It participates in amino-acid degradation; L-histidine degradation into L-glutamate; N-formimidoyl-L-glutamate from L-histidine: step 3/3. Its function is as follows. Catalyzes the hydrolytic cleavage of the carbon-nitrogen bond in imidazolone-5-propanoate to yield N-formimidoyl-L-glutamate. It is the third step in the universal histidine degradation pathway. This is Imidazolonepropionase from Shewanella putrefaciens (strain CN-32 / ATCC BAA-453).